The sequence spans 710 residues: Bifunctional lysine-specific demethylase and histidyl-hydroxylase NO66 (710 aa).

The segment at threonine 103–leucine 137 is disordered. The span at threonine 109–valine 132 shows a compositional bias: basic residues. One can recognise a JmjC domain in the interval cysteine 359–alanine 506. Positions 405, 407, and 472 each coordinate Fe cation.

The protein belongs to the ROX family. NO66 subfamily. Fe(2+) serves as cofactor.

Its subcellular location is the nucleus. It catalyses the reaction N(6),N(6)-dimethyl-L-lysyl(36)-[histone H3] + 2 2-oxoglutarate + 2 O2 = L-lysyl(36)-[histone H3] + 2 formaldehyde + 2 succinate + 2 CO2. In terms of biological role, oxygenase that can act as both a histone lysine demethylase and a ribosomal histidine hydroxylase. Specifically demethylates 'Lys-4' (H3K4me) and 'Lys-36' (H3K36me) of histone H3, thereby playing a central role in histone code. In Brugia malayi (Filarial nematode worm), this protein is Bifunctional lysine-specific demethylase and histidyl-hydroxylase NO66.